The following is a 49-amino-acid chain: Sperm protamine P1 (49 aa).

The protein belongs to the protamine P1 family. In terms of tissue distribution, testis.

The protein resides in the nucleus. Its subcellular location is the chromosome. In terms of biological role, protamines substitute for histones in the chromatin of sperm during the haploid phase of spermatogenesis. They compact sperm DNA into a highly condensed, stable and inactive complex. The sequence is that of Sperm protamine P1 (PRM1) from Rhinopoma hardwickii (Lesser mouse-tailed bat).